Here is a 211-residue protein sequence, read N- to C-terminus: Small ribosomal subunit protein uS5 (211 aa).

The S5 DRBM domain maps to 50–113; sequence LEDEVLDINM…DNAKINITRI (64 aa).

Belongs to the universal ribosomal protein uS5 family. Part of the 30S ribosomal subunit. Contacts protein S4.

Functionally, with S4 and S12 plays an important role in translational accuracy. The chain is Small ribosomal subunit protein uS5 from Methanococcoides burtonii (strain DSM 6242 / NBRC 107633 / OCM 468 / ACE-M).